Reading from the N-terminus, the 300-residue chain is NAD kinase (300 aa).

Asp77 serves as the catalytic Proton acceptor. NAD(+) is bound by residues 77 to 78, 151 to 152, His162, Arg179, Asp181, and 192 to 197; these read DG, ND, and TAYSLS.

It belongs to the NAD kinase family. A divalent metal cation is required as a cofactor.

The protein localises to the cytoplasm. It carries out the reaction NAD(+) + ATP = ADP + NADP(+) + H(+). Functionally, involved in the regulation of the intracellular balance of NAD and NADP, and is a key enzyme in the biosynthesis of NADP. Catalyzes specifically the phosphorylation on 2'-hydroxyl of the adenosine moiety of NAD to yield NADP. The protein is NAD kinase of Cellvibrio japonicus (strain Ueda107) (Pseudomonas fluorescens subsp. cellulosa).